We begin with the raw amino-acid sequence, 473 residues long: MSAINDPIAAASSGPSEPVQEVQVDVTKLTALSPEVISKQATINIGTIGHVAHGKSSTVRAISGVQTVRFKNELERNITIKLGYANAKIYKCQNPDCPPPSCFKSYPSSKEAHPKCERPGCDGRMDLQRHVSFVDCPGHDILMATMLTGAAVMNGALLLIAGNESCPQPQTGEHLAALEIIGVDPKNIVILQNKMDLVRESEAMEHCESIKKFVEGTTARLAPIIPVSAQLKFNIDAVVAAICNIAPPNYDFSADPRMVVIRSFDVNKPGAGVDELKGGVAGGSILQGVFKVGQEVEIRPGLITRDANGVCTCRPLRSRIVSLHAEQNHLQFAVPGGLIGVGTLVDPALCRADRLLGMVMSSVGKGPSIYVEIRAEVFLLRRLLGVKTDDSKKAKVGKLVVGETLFVNIGASQTGGRITAVKGGDVSIALTTPACCEKGEKIALSRRIDKHWRLIGWGKVRSGGTLCEVVDPE.

The tr-type G domain maps to 40 to 250 (QATINIGTIG…AICNIAPPNY (211 aa)). Residues 49–56 (GHVAHGKS) form a G1 region. 52–57 (AHGKSS) provides a ligand contact to GTP. Residues 77–81 (NITIK) form a G2 region. The G3 stretch occupies residues 135–138 (DCPG). GTP is bound by residues 193 to 196 (NKMD) and 228 to 230 (SAQ). The G4 stretch occupies residues 193-196 (NKMD). Residues 228–230 (SAQ) form a G5 region. The segment at 458–470 (GKVRSGGTLCEVV) is interacts with CDC123.

The protein belongs to the TRAFAC class translation factor GTPase superfamily. Classic translation factor GTPase family. EIF2G subfamily. As to quaternary structure, eukaryotic translation initiation factor 2 eIF2 is a heterotrimeric complex composed of an alpha, a beta and a gamma subunit. The factors eIF-1, eIF-2, eIF-3, TIF5/eIF-5 and methionyl-tRNAi form a multifactor complex (MFC) that may bind to the 40S ribosome.

It is found in the cytoplasm. The protein localises to the cytosol. It catalyses the reaction GTP + H2O = GDP + phosphate + H(+). In terms of biological role, as a subunit of eukaryotic initiation factor 2 eIF2, involved in the early steps of protein synthesis. In the presence of GTP, eIF-2 forms a ternary complex with initiator tRNA Met-tRNAi and then recruits the 40S ribosomal complex and initiation factors eIF-1, eIF-1A and eIF-3 to form the 43S pre-initiation complex (43S PIC), a step that determines the rate of protein translation. The 43S PIC binds to mRNA and scans downstream to the initiation codon, where it forms a 48S initiation complex by codon-anticodon base pairing. This leads to the displacement of eIF-1 to allow GTPase-activating protein (GAP) eIF-5-mediated hydrolysis of eIF2-bound GTP. Hydrolysis of GTP and release of Pi, which makes GTP hydrolysis irreversible, causes the release of the eIF-2-GDP binary complex from the 40S subunit, an event that is essential for the subsequent joining of the 60S ribosomal subunit to form an elongation-competent 80S ribosome. In order for eIF-2 to recycle and catalyze another round of initiation, the GDP bound to eIF-2 must be exchanged with GTP by way of a reaction catalyzed by GDP-GTP exchange factor (GEF) eIF-2B. The chain is Eukaryotic translation initiation factor 2 subunit gamma from Cryptococcus neoformans var. grubii serotype A (strain H99 / ATCC 208821 / CBS 10515 / FGSC 9487) (Filobasidiella neoformans var. grubii).